Consider the following 149-residue polypeptide: Calmodulin (149 aa).

Ala-2 bears the N-acetylalanine mark. EF-hand domains follow at residues 8 to 43 (EQIA…LGQN), 44 to 79 (PTEA…KMKD), 81 to 116 (DSEE…LGEK), and 117 to 149 (LTDE…MMAK). Asp-21, Asp-23, Asp-25, Cys-27, Glu-32, Asp-57, Asp-59, Asn-61, Thr-63, Glu-68, Asp-94, Asp-96, Asp-98, and Glu-105 together coordinate Ca(2+). The residue at position 116 (Lys-116) is an N6,N6,N6-trimethyllysine. Residues Asp-130, Asp-132, Asp-134, Gln-136, and Glu-141 each contribute to the Ca(2+) site.

This sequence belongs to the calmodulin family.

Calmodulin mediates the control of a large number of enzymes, ion channels and other proteins by Ca(2+). Among the enzymes to be stimulated by the calmodulin-Ca(2+) complex are a number of protein kinases and phosphatases. This Triticum aestivum (Wheat) protein is Calmodulin.